Here is a 61-residue protein sequence, read N- to C-terminus: Probable pancreatic secretory proteinase inhibitor (61 aa).

Positions 6–61 (LYRKPSCGEMSAMHACPMNFAPVCGTDGNTYPNECSLCFQRQNTKTDILITKDDRC) constitute a Kazal-like domain. Disulfide bonds link Cys-12–Cys-43, Cys-21–Cys-40, and Cys-29–Cys-61.

The protein localises to the secreted. The protein is Probable pancreatic secretory proteinase inhibitor of Anguilla anguilla (European freshwater eel).